The sequence spans 432 residues: UDP-N-acetylmuramate--L-alanine ligase (432 aa).

108 to 114 contacts ATP; it reads GAHGKTS.

This sequence belongs to the MurCDEF family.

The protein resides in the cytoplasm. It carries out the reaction UDP-N-acetyl-alpha-D-muramate + L-alanine + ATP = UDP-N-acetyl-alpha-D-muramoyl-L-alanine + ADP + phosphate + H(+). The protein operates within cell wall biogenesis; peptidoglycan biosynthesis. Its function is as follows. Cell wall formation. This chain is UDP-N-acetylmuramate--L-alanine ligase, found in Bacillus pumilus (strain SAFR-032).